We begin with the raw amino-acid sequence, 539 residues long: Probable malate:quinone oxidoreductase (539 aa).

It belongs to the MQO family. It depends on FAD as a cofactor.

The enzyme catalyses (S)-malate + a quinone = a quinol + oxaloacetate. It functions in the pathway carbohydrate metabolism; tricarboxylic acid cycle; oxaloacetate from (S)-malate (quinone route): step 1/1. The protein is Probable malate:quinone oxidoreductase of Sodalis glossinidius (strain morsitans).